The chain runs to 108 residues: Small ribosomal subunit protein eS25 (108 aa).

The interval M1–K36 is disordered. Positions K22–G31 are enriched in basic residues.

This sequence belongs to the eukaryotic ribosomal protein eS25 family.

This is Small ribosomal subunit protein eS25 (RPS25) from Solanum lycopersicum (Tomato).